Reading from the N-terminus, the 283-residue chain is uncharacterized protein (283 aa).

The N-terminal stretch at 1-21 (MKLKLKFLLISLLGSSLLLSA) is a signal peptide. The N-palmitoyl cysteine moiety is linked to residue Cys22. Residue Cys22 is the site of S-diacylglycerol cysteine attachment.

The protein belongs to the MG439/MG440 family.

The protein localises to the cell membrane. This is an uncharacterized protein from Mycoplasma pneumoniae (strain ATCC 29342 / M129 / Subtype 1) (Mycoplasmoides pneumoniae).